Reading from the N-terminus, the 180-residue chain is Shikimate kinase (180 aa).

14–19 (GAGKTC) lines the ATP pocket. T18 is a Mg(2+) binding site. 3 residues coordinate substrate: D36, R60, and G82. R120 contacts ATP. Residue R139 coordinates substrate.

The protein belongs to the shikimate kinase family. In terms of assembly, monomer. Mg(2+) serves as cofactor.

Its subcellular location is the cytoplasm. The catalysed reaction is shikimate + ATP = 3-phosphoshikimate + ADP + H(+). The protein operates within metabolic intermediate biosynthesis; chorismate biosynthesis; chorismate from D-erythrose 4-phosphate and phosphoenolpyruvate: step 5/7. In terms of biological role, catalyzes the specific phosphorylation of the 3-hydroxyl group of shikimic acid using ATP as a cosubstrate. The sequence is that of Shikimate kinase from Stenotrophomonas maltophilia (strain K279a).